The primary structure comprises 127 residues: Glycine cleavage system H protein (127 aa).

The Lipoyl-binding domain occupies 22–104; sequence KARIGITHFA…YEKAWMIVVE (83 aa). The residue at position 63 (K63) is an N6-lipoyllysine.

This sequence belongs to the GcvH family. In terms of assembly, the glycine cleavage system is composed of four proteins: P, T, L and H. The cofactor is (R)-lipoate.

Functionally, the glycine cleavage system catalyzes the degradation of glycine. The H protein shuttles the methylamine group of glycine from the P protein to the T protein. Is also involved in protein lipoylation via its role as an octanoyl/lipoyl carrier protein intermediate. This chain is Glycine cleavage system H protein, found in Bacillus velezensis (strain DSM 23117 / BGSC 10A6 / LMG 26770 / FZB42) (Bacillus amyloliquefaciens subsp. plantarum).